The following is a 309-amino-acid chain: Probable lipid kinase YegS-like (309 aa).

In terms of domain architecture, DAGKc spans 1–133; sequence MPLTHIRLLL…IDIIRANNNY (133 aa). Residues Ser-39, 65-71, and Thr-95 contribute to the ATP site; that span reads GDGSLNE. Mg(2+) contacts are provided by Leu-214, Asp-217, and Leu-219. Glu-273 acts as the Proton acceptor in catalysis.

Belongs to the diacylglycerol/lipid kinase family. YegS lipid kinase subfamily. Mg(2+) is required as a cofactor. Requires Ca(2+) as cofactor.

The protein resides in the cytoplasm. Its function is as follows. Probably phosphorylates lipids; the in vivo substrate is unknown. The sequence is that of Probable lipid kinase YegS-like from Shewanella frigidimarina (strain NCIMB 400).